Consider the following 729-residue polypeptide: Dipeptidyl peptidase 3 (729 aa).

Zn(2+) is bound at residue histidine 459. Residue glutamate 460 is part of the active site. Zn(2+) contacts are provided by histidine 464 and glutamate 517.

This sequence belongs to the peptidase M49 family. It depends on Zn(2+) as a cofactor.

The protein localises to the cytoplasm. The enzyme catalyses Release of an N-terminal dipeptide from a peptide comprising four or more residues, with broad specificity. Also acts on dipeptidyl 2-naphthylamides.. This chain is Dipeptidyl peptidase 3 (dpp3), found in Nematostella vectensis (Starlet sea anemone).